Reading from the N-terminus, the 221-residue chain is NAD(P)H-hydrate epimerase (221 aa).

Positions 9 to 219 (MRELETAAVK…NIGLPKELLS (211 aa)) constitute a YjeF N-terminal domain. Position 60–64 (60–64 (GNGGD)) interacts with (6S)-NADPHX. K(+) is bound by residues asparagine 61 and aspartate 131. Residues 135-141 (GIGFKGE), tyrosine 146, and aspartate 164 contribute to the (6S)-NADPHX site. Serine 167 is a binding site for K(+).

The protein belongs to the NnrE/AIBP family. K(+) is required as a cofactor.

The catalysed reaction is (6R)-NADHX = (6S)-NADHX. It carries out the reaction (6R)-NADPHX = (6S)-NADPHX. Its function is as follows. Catalyzes the epimerization of the S- and R-forms of NAD(P)HX, a damaged form of NAD(P)H that is a result of enzymatic or heat-dependent hydration. This is a prerequisite for the S-specific NAD(P)H-hydrate dehydratase to allow the repair of both epimers of NAD(P)HX. This Elusimicrobium minutum (strain Pei191) protein is NAD(P)H-hydrate epimerase.